The chain runs to 354 residues: D-alanine--D-alanine ligase (354 aa).

The region spanning 140–344 (KRLLRDSGLS…ISTLLTRLIM (205 aa)) is the ATP-grasp domain. 170-225 (ADMFGLPFFVKPVNQGSSIGVAKVNDDYSFHSALDIAFFYSHKIIIESCIAGRELE) contributes to the ATP binding site. Mg(2+) contacts are provided by D298, E311, and N313.

This sequence belongs to the D-alanine--D-alanine ligase family. Mg(2+) serves as cofactor. It depends on Mn(2+) as a cofactor.

The protein localises to the cytoplasm. It catalyses the reaction 2 D-alanine + ATP = D-alanyl-D-alanine + ADP + phosphate + H(+). It functions in the pathway cell wall biogenesis; peptidoglycan biosynthesis. Functionally, cell wall formation. This chain is D-alanine--D-alanine ligase, found in Blochmanniella floridana.